Reading from the N-terminus, the 497-residue chain is Cytochrome P450 26A1 (497 aa).

Heme is bound at residue Cys442.

It belongs to the cytochrome P450 family. It depends on heme as a cofactor.

It localises to the endoplasmic reticulum membrane. The protein localises to the microsome membrane. It catalyses the reaction all-trans-retinoate + reduced [NADPH--hemoprotein reductase] + O2 = all-trans-(4S)-hydroxyretinoate + oxidized [NADPH--hemoprotein reductase] + H2O + H(+). The enzyme catalyses all-trans-(4S)-hydroxyretinoate + reduced [NADPH--hemoprotein reductase] + O2 = all-trans-(4S,16)-dihydroxyretinoate + oxidized [NADPH--hemoprotein reductase] + H2O + H(+). The catalysed reaction is all-trans-retinoate + reduced [NADPH--hemoprotein reductase] + O2 = all-trans-18-hydroxyretinoate + oxidized [NADPH--hemoprotein reductase] + H2O + H(+). Its function is as follows. A cytochrome P450 monooxygenase involved in the metabolism of retinoates (RAs), the active metabolites of vitamin A, and critical signaling molecules in animals. RAs exist as at least four different isomers: all-trans-RA (atRA), 9-cis-RA, 13-cis-RA, and 9,13-dicis-RA, where atRA is considered to be the biologically active isomer, although 9-cis-RA and 13-cis-RA also have activity. Catalyzes the hydroxylation of atRA primarily at C-4 and C-18, thereby contributing to the regulation of atRA homeostasis and signaling. Hydroxylation of atRA limits its biological activity and initiates a degradative process leading to its eventual elimination. Involved in the convertion of atRA to all-trans-4-oxo-RA. Able to metabolize other RAs such as 9-cis, 13-cis and 9,13-di-cis RA. Can oxidize all-trans-13,14-dihydroretinoate (DRA) to metabolites which could include all-trans-4-oxo-DRA, all-trans-4-hydroxy-DRA, all-trans-5,8-epoxy-DRA, and all-trans-18-hydroxy-DRA. May play a role in the oxidative metabolism of xenobiotics such as tazarotenic acid. The chain is Cytochrome P450 26A1 from Mus musculus (Mouse).